Reading from the N-terminus, the 211-residue chain is Ribosomal RNA small subunit methyltransferase G (211 aa).

S-adenosyl-L-methionine-binding positions include G78, M83, 129–130 (AE), and R144.

This sequence belongs to the methyltransferase superfamily. RNA methyltransferase RsmG family.

Its subcellular location is the cytoplasm. It catalyses the reaction guanosine(527) in 16S rRNA + S-adenosyl-L-methionine = N(7)-methylguanosine(527) in 16S rRNA + S-adenosyl-L-homocysteine. Functionally, specifically methylates the N7 position of guanine in position 527 of 16S rRNA. This chain is Ribosomal RNA small subunit methyltransferase G, found in Pseudomonas syringae pv. tomato (strain ATCC BAA-871 / DC3000).